The primary structure comprises 371 residues: Diguanylate cyclase A (371 aa).

In terms of domain architecture, GGDEF spans 233-366 (ETLSILMIDI…GRNRVTLSKN (134 aa)). Mg(2+) contacts are provided by aspartate 241, isoleucine 242, and glutamate 284. Catalysis depends on glutamate 284, which acts as the Proton acceptor.

As to quaternary structure, exists as a homodimer and as larger aggregates. Both dimers and aggregates possess DGC activity. Mg(2+) is required as a cofactor. Mn(2+) serves as cofactor.

Its subcellular location is the cytoplasm. The enzyme catalyses 2 GTP = 3',3'-c-di-GMP + 2 diphosphate. Its activity is regulated as follows. Allosterically regulated by a feedback inhibition loop. Catalyzes the conversion of GTP to cyclic-di-GMP (c-di-GMP). Shows activity under aerobic and anaerobic reaction conditions. The polypeptide is Diguanylate cyclase A (Treponema denticola (strain ATCC 35405 / DSM 14222 / CIP 103919 / JCM 8153 / KCTC 15104)).